Here is a 603-residue protein sequence, read N- to C-terminus: Aspartate--tRNA(Asp/Asn) ligase (603 aa).

Glu-172 lines the L-aspartate pocket. An aspartate region spans residues 196-199 (QLFK). Residue Arg-218 participates in L-aspartate binding. Residues 218–220 (RDE) and Gln-227 each bind ATP. Position 457 (His-457) interacts with L-aspartate. Position 491 (Glu-491) interacts with ATP. Position 498 (Arg-498) interacts with L-aspartate. 543 to 546 (GLDR) contributes to the ATP binding site.

The protein belongs to the class-II aminoacyl-tRNA synthetase family. Type 1 subfamily. Homodimer.

The protein resides in the cytoplasm. The enzyme catalyses tRNA(Asx) + L-aspartate + ATP = L-aspartyl-tRNA(Asx) + AMP + diphosphate. Aspartyl-tRNA synthetase with relaxed tRNA specificity since it is able to aspartylate not only its cognate tRNA(Asp) but also tRNA(Asn). Reaction proceeds in two steps: L-aspartate is first activated by ATP to form Asp-AMP and then transferred to the acceptor end of tRNA(Asp/Asn). In Laribacter hongkongensis (strain HLHK9), this protein is Aspartate--tRNA(Asp/Asn) ligase.